A 132-amino-acid polypeptide reads, in one-letter code: Small ribosomal subunit protein uS8c (132 aa).

The protein belongs to the universal ribosomal protein uS8 family. As to quaternary structure, part of the 30S ribosomal subunit.

It is found in the plastid. The protein localises to the chloroplast. Its function is as follows. One of the primary rRNA binding proteins, it binds directly to 16S rRNA central domain where it helps coordinate assembly of the platform of the 30S subunit. The protein is Small ribosomal subunit protein uS8c (rps8) of Trieres chinensis (Marine centric diatom).